Consider the following 1083-residue polypeptide: Ubiquitin carboxyl-terminal hydrolase 1 (1083 aa).

The UBP-type zinc-finger motif lies at Arg30–Lys165. Zn(2+)-binding residues include Cys32, His34, Cys56, Cys59, Cys95, Cys98, Cys103, His115, His119, His125, Cys139, and Cys142. The 882-residue stretch at Arg202 to Ile1083 folds into the USP domain. Residue Cys211 is the Nucleophile of the active site. Disordered stretches follow at residues Lys387–Thr424 and Gly450–Ile486. Basic and acidic residues-rich tracts occupy residues Ser409–Thr419 and Leu455–Arg473. A compositionally biased stretch (polar residues) spans Ala474–Gly485. His1029 functions as the Proton acceptor in the catalytic mechanism.

Belongs to the peptidase C19 family.

The enzyme catalyses Thiol-dependent hydrolysis of ester, thioester, amide, peptide and isopeptide bonds formed by the C-terminal Gly of ubiquitin (a 76-residue protein attached to proteins as an intracellular targeting signal).. Recognizes and hydrolyzes the peptide bond at the C-terminal Gly of ubiquitin. Involved in the processing of poly-ubiquitin precursors as well as that of ubiquitinated proteins. Is involved in resistance to the arginine analog canavanine (CAN). The chain is Ubiquitin carboxyl-terminal hydrolase 1 (UBP1) from Arabidopsis thaliana (Mouse-ear cress).